Consider the following 686-residue polypeptide: DNA gyrase subunit B (686 aa).

The span at 1 to 27 (MADSGNPNENNPSTDTGVNDAVSTSHG) shows a compositional bias: polar residues. Residues 1–29 (MADSGNPNENNPSTDTGVNDAVSTSHGDA) are disordered. A Toprim domain is found at 465 to 579 (CEIFIVEGDS…SGHVYLSRPP (115 aa)). Glu-471, Asp-544, and Asp-546 together coordinate Mg(2+).

This sequence belongs to the type II topoisomerase GyrB family. In terms of assembly, heterotetramer, composed of two GyrA and two GyrB chains. In the heterotetramer, GyrA contains the active site tyrosine that forms a transient covalent intermediate with DNA, while GyrB binds cofactors and catalyzes ATP hydrolysis. Mg(2+) serves as cofactor. Requires Mn(2+) as cofactor. Ca(2+) is required as a cofactor.

The protein localises to the cytoplasm. It carries out the reaction ATP-dependent breakage, passage and rejoining of double-stranded DNA.. Its function is as follows. A type II topoisomerase that negatively supercoils closed circular double-stranded (ds) DNA in an ATP-dependent manner to modulate DNA topology and maintain chromosomes in an underwound state. Negative supercoiling favors strand separation, and DNA replication, transcription, recombination and repair, all of which involve strand separation. Also able to catalyze the interconversion of other topological isomers of dsDNA rings, including catenanes and knotted rings. Type II topoisomerases break and join 2 DNA strands simultaneously in an ATP-dependent manner. The chain is DNA gyrase subunit B from Streptomyces coelicolor (strain ATCC BAA-471 / A3(2) / M145).